Consider the following 573-residue polypeptide: NEDD4-binding protein 3-B (573 aa).

Disordered regions lie at residues 119-138 (EFSK…RFGP), 173-220 (CVGS…NSYS), and 384-405 (GENE…NLED). Over residues 125 to 135 (LPERGHSDKSR) the composition is skewed to basic and acidic residues. Over residues 186 to 196 (SNSHSNNPSES) the composition is skewed to low complexity. 2 stretches are compositionally biased toward polar residues: residues 207–220 (DSKQ…NSYS) and 392–401 (KQSQSDNSGP). Residues 287–474 (ESVEDVARQL…CLQALEDVKS (188 aa)) are a coiled coil.

It belongs to the N4BP3 family.

The protein resides in the cytoplasmic vesicle. It is found in the cell projection. It localises to the axon. Its subcellular location is the dendrite. Functionally, plays a role in axon and dendrite arborization during cranial nerve development. Also important for neural crest migration and early development of other anterior structures including eye, brain and cranial cartilage. This is NEDD4-binding protein 3-B from Xenopus laevis (African clawed frog).